Here is a 304-residue protein sequence, read N- to C-terminus: Acetaldehyde dehydrogenase 4 (304 aa).

Cysteine 131 functions as the Acyl-thioester intermediate in the catalytic mechanism. Residues 162–170 (SAGPGTRKN) and asparagine 273 contribute to the NAD(+) site.

This sequence belongs to the acetaldehyde dehydrogenase family.

The catalysed reaction is acetaldehyde + NAD(+) + CoA = acetyl-CoA + NADH + H(+). The protein is Acetaldehyde dehydrogenase 4 of Dechloromonas aromatica (strain RCB).